The following is a 287-amino-acid chain: Membrane protein insertase YidC 2 (287 aa).

The first 26 residues, 1–26 (MKKKKRFKQKLLIASLVIGLMAVLSG), serve as a signal peptide directing secretion. A lipid anchor (N-palmitoyl cysteine) is attached at cysteine 27. Residue cysteine 27 is the site of S-diacylglycerol cysteine attachment. Transmembrane regions (helical) follow at residues 65 to 85 (YAVG…PLMI), 135 to 155 (MMGC…YQAI), 178 to 198 (YILP…SMMG), 207 to 224 (AMIV…GITL), and 228 to 250 (LALY…NNPF).

Belongs to the OXA1/ALB3/YidC family. Type 2 subfamily.

The protein localises to the cell membrane. Its function is as follows. Required for the insertion and/or proper folding and/or complex formation of integral membrane proteins into the membrane. Involved in integration of membrane proteins that insert both dependently and independently of the Sec translocase complex, as well as at least some lipoproteins. The chain is Membrane protein insertase YidC 2 from Listeria monocytogenes serovar 1/2a (strain ATCC BAA-679 / EGD-e).